The sequence spans 128 residues: uncharacterized protein (128 aa).

Residues 24 to 43 (KRTQNNTEQASRAINSPLQS) form a disordered region. Over residues 26–43 (TQNNTEQASRAINSPLQS) the composition is skewed to polar residues.

This is an uncharacterized protein from Homo sapiens (Human).